The following is a 40-amino-acid chain: Photosystem II reaction center protein J (40 aa).

Residues 8–28 (IPLWLIGTVTGILVIGLIGFF) form a helical membrane-spanning segment.

The protein belongs to the PsbJ family. PSII is composed of 1 copy each of membrane proteins PsbA, PsbB, PsbC, PsbD, PsbE, PsbF, PsbH, PsbI, PsbJ, PsbK, PsbL, PsbM, PsbT, PsbX, PsbY, PsbZ, Psb30/Ycf12, at least 3 peripheral proteins of the oxygen-evolving complex and a large number of cofactors. It forms dimeric complexes.

Its subcellular location is the plastid. The protein resides in the chloroplast thylakoid membrane. Functionally, one of the components of the core complex of photosystem II (PSII). PSII is a light-driven water:plastoquinone oxidoreductase that uses light energy to abstract electrons from H(2)O, generating O(2) and a proton gradient subsequently used for ATP formation. It consists of a core antenna complex that captures photons, and an electron transfer chain that converts photonic excitation into a charge separation. This Zea mays (Maize) protein is Photosystem II reaction center protein J.